Consider the following 496-residue polypeptide: Cytochrome P450 3A30 (496 aa).

Residue Cys-441 participates in heme binding.

It belongs to the cytochrome P450 family. Heme serves as cofactor. As to expression, highly expressed in liver and intestine. Moderate expression in gill and spleen. Low expression in kidney, brain and heart.

Its subcellular location is the endoplasmic reticulum membrane. The protein resides in the microsome membrane. The enzyme catalyses an organic molecule + reduced [NADPH--hemoprotein reductase] + O2 = an alcohol + oxidized [NADPH--hemoprotein reductase] + H2O + H(+). Its function is as follows. Putative steroid 6-beta-hydroxylase. The sequence is that of Cytochrome P450 3A30 (cyp3a30) from Fundulus heteroclitus (Killifish).